A 27-amino-acid chain; its full sequence is Peptide Cn29 (27 aa).

Intrachain disulfides connect Cys2-Cys23, Cys5-Cys18, and Cys12-Cys25.

In terms of tissue distribution, expressed by the venom gland.

It localises to the secreted. This chain is Peptide Cn29, found in Centruroides noxius (Mexican scorpion).